The following is a 1080-amino-acid chain: Carbamoyl phosphate synthase large chain (1080 aa).

The tract at residues 1–403 (MPKRTDLETI…SLQKALRGLE (403 aa)) is carboxyphosphate synthetic domain. ATP is bound by residues arginine 129, arginine 169, glycine 175, glycine 176, glutamate 208, valine 210, glutamate 215, glycine 241, valine 242, histidine 243, glutamine 285, and glutamate 299. One can recognise an ATP-grasp 1 domain in the interval 133–328 (RVAMGEIGLD…IAKVAAKLAV (196 aa)). 3 residues coordinate Mg(2+): glutamine 285, glutamate 299, and asparagine 301. 3 residues coordinate Mn(2+): glutamine 285, glutamate 299, and asparagine 301. The segment at 404–554 (TGKIGLDPTG…YSTYEDECEA (151 aa)) is oligomerization domain. The segment at 555–942 (LPTDRDKIMI…AFARAQEAGG (388 aa)) is carbamoyl phosphate synthetic domain. One can recognise an ATP-grasp 2 domain in the interval 679–876 (QQLVDKLGLK…LAKIAARCMA (198 aa)). Residues arginine 715, arginine 754, leucine 756, glutamate 761, glycine 787, valine 788, histidine 789, serine 790, glutamine 830, and glutamate 847 each contribute to the ATP site. The Mg(2+) site is built by glutamine 830, glutamate 847, and asparagine 849. Mn(2+)-binding residues include glutamine 830, glutamate 847, and asparagine 849. Residues 943–1080 (IKAPPLGKAF…LQELHKELEA (138 aa)) enclose the MGS-like domain. Positions 943–1080 (IKAPPLGKAF…LQELHKELEA (138 aa)) are allosteric domain.

This sequence belongs to the CarB family. Composed of two chains; the small (or glutamine) chain promotes the hydrolysis of glutamine to ammonia, which is used by the large (or ammonia) chain to synthesize carbamoyl phosphate. Tetramer of heterodimers (alpha,beta)4. Mg(2+) is required as a cofactor. Mn(2+) serves as cofactor.

The catalysed reaction is hydrogencarbonate + L-glutamine + 2 ATP + H2O = carbamoyl phosphate + L-glutamate + 2 ADP + phosphate + 2 H(+). The enzyme catalyses hydrogencarbonate + NH4(+) + 2 ATP = carbamoyl phosphate + 2 ADP + phosphate + 2 H(+). The protein operates within amino-acid biosynthesis; L-arginine biosynthesis; carbamoyl phosphate from bicarbonate: step 1/1. Its pathway is pyrimidine metabolism; UMP biosynthesis via de novo pathway; (S)-dihydroorotate from bicarbonate: step 1/3. In terms of biological role, large subunit of the glutamine-dependent carbamoyl phosphate synthetase (CPSase). CPSase catalyzes the formation of carbamoyl phosphate from the ammonia moiety of glutamine, carbonate, and phosphate donated by ATP, constituting the first step of 2 biosynthetic pathways, one leading to arginine and/or urea and the other to pyrimidine nucleotides. The large subunit (synthetase) binds the substrates ammonia (free or transferred from glutamine from the small subunit), hydrogencarbonate and ATP and carries out an ATP-coupled ligase reaction, activating hydrogencarbonate by forming carboxy phosphate which reacts with ammonia to form carbamoyl phosphate. The sequence is that of Carbamoyl phosphate synthase large chain from Xanthomonas axonopodis pv. citri (strain 306).